We begin with the raw amino-acid sequence, 118 residues long: Beta-2-microglobulin (118 aa).

The first 20 residues, Met1–Ala20, serve as a signal peptide directing secretion. The 88-residue stretch at Pro25–Val112 folds into the Ig-like C1-type domain. Cys45 and Cys99 form a disulfide bridge.

This sequence belongs to the beta-2-microglobulin family. In terms of assembly, heterodimer of an alpha chain and a beta chain. Beta-2-microglobulin is the beta-chain of major histocompatibility complex class I molecules.

Its subcellular location is the secreted. Component of the class I major histocompatibility complex (MHC). Involved in the presentation of peptide antigens to the immune system. The polypeptide is Beta-2-microglobulin (B2M) (Sus scrofa (Pig)).